Consider the following 117-residue polypeptide: uncharacterized protein (117 aa).

Residues 1-12 (MAQNSVSLSAGD) are compositionally biased toward polar residues. Disordered stretches follow at residues 1 to 30 (MAQNSVSLSAGDQANRMAHRSSQGDLNPSA) and 43 to 87 (VTRL…SPYP).

This is an uncharacterized protein from Mus musculus (Mouse).